The sequence spans 353 residues: Paraneoplastic antigen Ma1 homolog (353 aa).

The protein belongs to the PNMA family. As to expression, predominantly expressed in testis. Very low levels in the brain, including in the piriform cortex, hippocampus and some subcortical nuclei.

Its subcellular location is the nucleus. The protein localises to the nucleolus. The sequence is that of Paraneoplastic antigen Ma1 homolog (Pnma1) from Mus musculus (Mouse).